The following is a 442-amino-acid chain: Proline--tRNA ligase (442 aa).

Belongs to the class-II aminoacyl-tRNA synthetase family. ProS type 2 subfamily. In terms of assembly, homodimer.

The protein localises to the cytoplasm. The enzyme catalyses tRNA(Pro) + L-proline + ATP = L-prolyl-tRNA(Pro) + AMP + diphosphate. In terms of biological role, catalyzes the attachment of proline to tRNA(Pro) in a two-step reaction: proline is first activated by ATP to form Pro-AMP and then transferred to the acceptor end of tRNA(Pro). This is Proline--tRNA ligase from Brucella ovis (strain ATCC 25840 / 63/290 / NCTC 10512).